The sequence spans 438 residues: 23S rRNA (uracil(1939)-C(5))-methyltransferase RlmD (438 aa).

Residues 10 to 68 form the TRAM domain; sequence RVTTRQTITVKVHDLDSFGQGVAHHNGKALFVQGALPDEVAEVSIIEDKRHFSRGVATR. The [4Fe-4S] cluster site is built by Cys81, Cys87, Cys90, and Cys168. Residues Gln271, Phe300, Asn305, Glu321, Asn348, and Asp369 each contribute to the S-adenosyl-L-methionine site. The active-site Nucleophile is the Cys395.

It belongs to the class I-like SAM-binding methyltransferase superfamily. RNA M5U methyltransferase family. RlmD subfamily.

It carries out the reaction uridine(1939) in 23S rRNA + S-adenosyl-L-methionine = 5-methyluridine(1939) in 23S rRNA + S-adenosyl-L-homocysteine + H(+). In terms of biological role, catalyzes the formation of 5-methyl-uridine at position 1939 (m5U1939) in 23S rRNA. This is 23S rRNA (uracil(1939)-C(5))-methyltransferase RlmD from Erwinia tasmaniensis (strain DSM 17950 / CFBP 7177 / CIP 109463 / NCPPB 4357 / Et1/99).